Consider the following 121-residue polypeptide: Alpha-endosulfine (121 aa).

The interval 1 to 53 is disordered; that stretch reads MSQKQEEENPAEETGEEKQDTQEKEGILPEKAEEAKLKAKYPSLGQKPGGSDF. Residue serine 2 is modified to N-acetylserine. Serine 2 is modified (phosphoserine). A compositionally biased stretch (basic and acidic residues) spans 16-37; sequence EEKQDTQEKEGILPEKAEEAKL. The residue at position 21 (threonine 21) is a Phosphothreonine. Serine 43 carries the phosphoserine modification. Phosphoserine; by GWL is present on serine 67. Residues 79 to 121 are disordered; it reads NKQLPSAGPDKNLVTGDHIPTPQDLPQRKSSLVTSKLAGGQVE. Serine 109 is modified (phosphoserine; by PKA).

The protein belongs to the endosulfine family. As to quaternary structure, interacts (when phosphorylated at Ser-67) with PPP2R2D. Interacts with ABCC8. Interacts with SNCA; interaction is disrupted when phosphorylated at Ser-109. In terms of processing, phosphorylation at Ser-67 by GWL during mitosis is essential for interaction with PPP2R2D (PR55-delta) and subsequent inactivation of PP2A. Phosphorylated by PKA.

The protein localises to the cytoplasm. Protein phosphatase inhibitor that specifically inhibits protein phosphatase 2A (PP2A) during mitosis. When phosphorylated at Ser-67 during mitosis, specifically interacts with PPP2R2D (PR55-delta) and inhibits its activity, leading to inactivation of PP2A, an essential condition to keep cyclin-B1-CDK1 activity high during M phase. Also acts as a stimulator of insulin secretion by interacting with sulfonylurea receptor (ABCC8), thereby preventing sulfonylurea from binding to its receptor and reducing K(ATP) channel currents. In Bos taurus (Bovine), this protein is Alpha-endosulfine (ENSA).